A 187-amino-acid polypeptide reads, in one-letter code: UPF0301 protein VP2612 (187 aa).

It belongs to the UPF0301 (AlgH) family.

The protein is UPF0301 protein VP2612 of Vibrio parahaemolyticus serotype O3:K6 (strain RIMD 2210633).